The primary structure comprises 236 residues: 2,3,4,5-tetrahydropyridine-2,6-dicarboxylate N-acetyltransferase (236 aa).

This sequence belongs to the transferase hexapeptide repeat family. DapH subfamily.

It catalyses the reaction (S)-2,3,4,5-tetrahydrodipicolinate + acetyl-CoA + H2O = L-2-acetamido-6-oxoheptanedioate + CoA. Its pathway is amino-acid biosynthesis; L-lysine biosynthesis via DAP pathway; LL-2,6-diaminopimelate from (S)-tetrahydrodipicolinate (acetylase route): step 1/3. Catalyzes the transfer of an acetyl group from acetyl-CoA to tetrahydrodipicolinate. This chain is 2,3,4,5-tetrahydropyridine-2,6-dicarboxylate N-acetyltransferase, found in Clostridium botulinum (strain Loch Maree / Type A3).